Here is a 342-residue protein sequence, read N- to C-terminus: MVKVYYNGDIKENVLAGKKVAVIGYGSQGHAHALNLKESGVDVIVGVRKGKSFAKAEEDGHQVFTVREAAEQADIVMVLLPDEQQQKVYEAEIKDGLQAGNSLVFAHGFNVHFHQIVPPADVDVFLVAPKGPGHLVRRTFEQGAGVPALFAIYQDVTGEAKDKALAYAKAIGGARAGVLETTFKEETETDLFGEQAVLCGGLTSLVKAGFETLTEAGYQPELAYFECLHELKLIVDLMYEEGLAGMRYSISDTAQWGDFVSGPRVVDEKVKESMKEVLKDIQNGTFAKEWIVENQVNRPRFNAINASENEHQIEVVGRKLREMMPFVKQGKKKEAVVAGAKN.

Positions 2–181 (VKVYYNGDIK…GGARAGVLET (180 aa)) constitute a KARI N-terminal Rossmann domain. NADP(+) contacts are provided by residues 25-28 (YGSQ), R48, S52, and 82-85 (DEQQ). H107 is an active-site residue. G133 contacts NADP(+). The 146-residue stretch at 182 to 327 (TFKEETETDL…RKLREMMPFV (146 aa)) folds into the KARI C-terminal knotted domain. Mg(2+) is bound by residues D190, E194, E226, and E230. S251 is a substrate binding site.

It belongs to the ketol-acid reductoisomerase family. Mg(2+) is required as a cofactor.

The catalysed reaction is (2R)-2,3-dihydroxy-3-methylbutanoate + NADP(+) = (2S)-2-acetolactate + NADPH + H(+). The enzyme catalyses (2R,3R)-2,3-dihydroxy-3-methylpentanoate + NADP(+) = (S)-2-ethyl-2-hydroxy-3-oxobutanoate + NADPH + H(+). It functions in the pathway amino-acid biosynthesis; L-isoleucine biosynthesis; L-isoleucine from 2-oxobutanoate: step 2/4. The protein operates within amino-acid biosynthesis; L-valine biosynthesis; L-valine from pyruvate: step 2/4. Involved in the biosynthesis of branched-chain amino acids (BCAA). Catalyzes an alkyl-migration followed by a ketol-acid reduction of (S)-2-acetolactate (S2AL) to yield (R)-2,3-dihydroxy-isovalerate. In the isomerase reaction, S2AL is rearranged via a Mg-dependent methyl migration to produce 3-hydroxy-3-methyl-2-ketobutyrate (HMKB). In the reductase reaction, this 2-ketoacid undergoes a metal-dependent reduction by NADPH to yield (R)-2,3-dihydroxy-isovalerate. This chain is Ketol-acid reductoisomerase (NADP(+)), found in Bacillus licheniformis (strain ATCC 14580 / DSM 13 / JCM 2505 / CCUG 7422 / NBRC 12200 / NCIMB 9375 / NCTC 10341 / NRRL NRS-1264 / Gibson 46).